The chain runs to 220 residues: uncharacterized protein (220 aa).

4 consecutive transmembrane segments (helical) span residues 61–81, 85–105, 115–135, and 150–170; these read LISV…SFFG, SVMF…YGAF, FVII…ILLL, and LPLE…SLLL.

The protein localises to the membrane. This is an uncharacterized protein from Caenorhabditis elegans.